Consider the following 115-residue polypeptide: Replication initiation control protein YabA (115 aa).

Histidine 85, cysteine 87, cysteine 101, and cysteine 104 together coordinate Zn(2+).

It belongs to the YabA family. As to quaternary structure, homotetramer. Interacts with both DnaA and DnaN, acting as a bridge between these two proteins. Zn(2+) is required as a cofactor.

The protein localises to the cytoplasm. Its subcellular location is the nucleoid. In terms of biological role, involved in control of chromosome replication initiation. Inhibits the cooperative binding of DnaA to the oriC region, thus negatively regulating initiation of chromosome replication. Inhibits the ability of DnaA-ATP to form a helix on DNA; does not disassemble preformed DnaA-DNA helices. Decreases the residence time of DnaA on the chromosome at its binding sites (oriC, replication forks and promoter-binding sites). Tethers DnaA to the replication machinery via the DNA polymerase beta sliding clamp subunit (dnaN). Associates with oriC and other DnaA targets on the chromosome in a DnaA-dependent manner. This Lactiplantibacillus plantarum (strain ATCC BAA-793 / NCIMB 8826 / WCFS1) (Lactobacillus plantarum) protein is Replication initiation control protein YabA.